The primary structure comprises 142 residues: Large ribosomal subunit protein uL11 (142 aa).

The protein belongs to the universal ribosomal protein uL11 family. In terms of assembly, part of the ribosomal stalk of the 50S ribosomal subunit. Interacts with L10 and the large rRNA to form the base of the stalk. L10 forms an elongated spine to which L12 dimers bind in a sequential fashion forming a multimeric L10(L12)X complex. One or more lysine residues are methylated.

Functionally, forms part of the ribosomal stalk which helps the ribosome interact with GTP-bound translation factors. In Gamma-proteobacterium EBAC31A08, this protein is Large ribosomal subunit protein uL11.